The chain runs to 176 residues: Large ribosomal subunit protein uL6 (176 aa).

Positions 151–170 are enriched in basic and acidic residues; sequence RPPEPYKGKGVRYADEQVRR. Residues 151-176 are disordered; it reads RPPEPYKGKGVRYADEQVRRKEAKKK.

Belongs to the universal ribosomal protein uL6 family. In terms of assembly, part of the 50S ribosomal subunit.

Its function is as follows. This protein binds to the 23S rRNA, and is important in its secondary structure. It is located near the subunit interface in the base of the L7/L12 stalk, and near the tRNA binding site of the peptidyltransferase center. The sequence is that of Large ribosomal subunit protein uL6 from Shewanella loihica (strain ATCC BAA-1088 / PV-4).